A 685-amino-acid chain; its full sequence is uncharacterized protein (685 aa).

Disordered regions lie at residues 78-220, 251-280, 296-332, and 459-657; these read AKQA…HIFD, TQNP…RNNE, DNNN…NNSE, and RNVK…NNKS. Residues 86–139 are a coiled coil; it reads KKKETENVEEEGEEKEKKIDDESFPDLLESTEKMKSELSKEKDKKKKQLKDGKK. Composition is skewed to basic and acidic residues over residues 115-127 and 165-181; these read STEK…SKEK and FNDK…KKND. A compositionally biased stretch (low complexity) spans 190–215; sequence NNQQNDMNNNNQNNQNNMNNNNNNNN. The span at 263 to 276 shows a compositional bias: polar residues; sequence LTNNQGENNIPTDN. Low complexity predominate over residues 297–307; sequence NNNNNNNNNNN. The segment covering 308–331 has biased composition (polar residues); the sequence is LGSAMNTPMNNMNKGGPRNNVNNS. Composition is skewed to low complexity over residues 460–474 and 481–498; these read NVKN…GNTN and NNRG…NNFN. A compositionally biased stretch (basic and acidic residues) spans 499 to 515; that stretch reads RRNDKNDNRNFRRKDID. Residues 520-530 are compositionally biased toward polar residues; it reads WRNTANPTQEE. The segment covering 531-590 has biased composition (low complexity); the sequence is NNNNMNHNNNYNNNNNNNNNNNNNNNNNNNTNHGKNFRNFNNLNNMKNNNSSNNKMMGMN. A compositionally biased stretch (polar residues) spans 591–602; it reads HMQQKGMNSSTG. Positions 617-656 are enriched in low complexity; it reads NNKMYKNNMGNANNNNNNNAVNTNFNNNNNNGNFHMNNNK.

This is an uncharacterized protein from Plasmodium falciparum (isolate 3D7).